The sequence spans 396 residues: Acetate kinase (396 aa).

A Mg(2+)-binding site is contributed by asparagine 7. Lysine 14 is an ATP binding site. Arginine 88 is a binding site for substrate. Aspartate 145 serves as the catalytic Proton donor/acceptor. ATP-binding positions include 205-209 (HLGNG), 279-281 (DFR), and 327-331 (GIGEN). Glutamate 381 provides a ligand contact to Mg(2+).

This sequence belongs to the acetokinase family. Homodimer. Requires Mg(2+) as cofactor. The cofactor is Mn(2+).

It localises to the cytoplasm. The catalysed reaction is acetate + ATP = acetyl phosphate + ADP. Its pathway is metabolic intermediate biosynthesis; acetyl-CoA biosynthesis; acetyl-CoA from acetate: step 1/2. Catalyzes the formation of acetyl phosphate from acetate and ATP. Can also catalyze the reverse reaction. In Campylobacter jejuni subsp. jejuni serotype O:2 (strain ATCC 700819 / NCTC 11168), this protein is Acetate kinase.